Here is a 712-residue protein sequence, read N- to C-terminus: Polyribonucleotide nucleotidyltransferase (712 aa).

Mg(2+)-binding residues include aspartate 487 and aspartate 493. The 60-residue stretch at 554–613 (PKIITMTINPDKIRDVIGPSGKQINKIIEETGVKIDIEQDGTVFISSINQEMNDKAKKII) folds into the KH domain. The 69-residue stretch at 623-691 (GEIYEGKVKR…KQGRVNLSRK (69 aa)) folds into the S1 motif domain.

This sequence belongs to the polyribonucleotide nucleotidyltransferase family. The cofactor is Mg(2+).

It is found in the cytoplasm. The enzyme catalyses RNA(n+1) + phosphate = RNA(n) + a ribonucleoside 5'-diphosphate. Functionally, involved in mRNA degradation. Catalyzes the phosphorolysis of single-stranded polyribonucleotides processively in the 3'- to 5'-direction. The chain is Polyribonucleotide nucleotidyltransferase from Bacillus anthracis (strain CDC 684 / NRRL 3495).